We begin with the raw amino-acid sequence, 215 residues long: Protein C' (215 aa).

Positions 12-34 (MPSFLKKILKLRGRRQEDESRSR) are disordered. An involved in self-degradation and in host STAT1 degradation region spans residues 15-22 (FLKKILKL).

Belongs to the respirovirus protein C family. In terms of assembly, the different isoforms interact (via C-terminus) with unphosphorylated and phosphorylated human STAT1 (via N-terminus), favoring the formation of parallel STAT1 homodimers. The different isoforms do not interact with host STAT2. C protein interacts with L protein; this interaction has an inhibitory effect on viral transcription and replication. In terms of processing, Y1 and Y2 proteins are produced not only by alternative initiation, but also by proteolytic cleavage of C'. Only alternative initiation is detected in vitro, whereas in vivo cleavage seems to be predominant.

It is found in the host cytoplasm. Functionally, the different products prevent the establishment of cellular antiviral state by blocking the interferon-alpha/beta (IFN-alpha/beta) and IFN-gamma signaling pathways. They inhibit IFN-alpha/beta induced tyrosine phosphorylation of STAT1 and STAT2. Blocking the IFN-alpha/beta pathway requires binding to STAT1 in the cytoplasm. They inhibit IFN-gamma induced serine phosphorylation of STAT1. Block the IFN-gamma pathway by binding to and stabilizing the parallel form of the STAT1 dimer, further inducing high-molecular-weight complex formation and inhibition of transcription by IFN-gamma. May also have a role in preventing the cell to enter apoptosis. Modulate regulation of viral transcription and replication. Overexpression inhibits the viral RNA polymerase. The absence of all C', C, Y1 and Y2 proteins leads to viral delayed growth. Plays an important role in virion particles release. Modulates virion shape. This chain is Protein C' (P/V/C), found in Sendai virus (strain Nagoya) (SeV).